Reading from the N-terminus, the 105-residue chain is Phosphoribosyl-ATP pyrophosphatase (105 aa).

The protein belongs to the PRA-PH family.

Its subcellular location is the cytoplasm. The catalysed reaction is 1-(5-phospho-beta-D-ribosyl)-ATP + H2O = 1-(5-phospho-beta-D-ribosyl)-5'-AMP + diphosphate + H(+). The protein operates within amino-acid biosynthesis; L-histidine biosynthesis; L-histidine from 5-phospho-alpha-D-ribose 1-diphosphate: step 2/9. This is Phosphoribosyl-ATP pyrophosphatase from Ruegeria sp. (strain TM1040) (Silicibacter sp.).